Reading from the N-terminus, the 211-residue chain is Uridine kinase (211 aa).

13-20 (GASASGKS) serves as a coordination point for ATP.

The protein belongs to the uridine kinase family.

The protein localises to the cytoplasm. The enzyme catalyses uridine + ATP = UMP + ADP + H(+). It carries out the reaction cytidine + ATP = CMP + ADP + H(+). Its pathway is pyrimidine metabolism; CTP biosynthesis via salvage pathway; CTP from cytidine: step 1/3. It participates in pyrimidine metabolism; UMP biosynthesis via salvage pathway; UMP from uridine: step 1/1. This Shewanella pealeana (strain ATCC 700345 / ANG-SQ1) protein is Uridine kinase.